The sequence spans 212 residues: Cytidylate kinase (212 aa).

7-15 lines the ATP pocket; that stretch reads GPAASGKGT.

This sequence belongs to the cytidylate kinase family. Type 1 subfamily.

It is found in the cytoplasm. It catalyses the reaction CMP + ATP = CDP + ADP. The catalysed reaction is dCMP + ATP = dCDP + ADP. The sequence is that of Cytidylate kinase from Bradyrhizobium sp. (strain ORS 278).